A 406-amino-acid polypeptide reads, in one-letter code: Phosphorylase b kinase gamma catalytic chain, liver/testis isoform (406 aa).

A Protein kinase domain is found at 24-291 (YDPKDIIGRG…AEQALQHPFF (268 aa)). ATP contacts are provided by residues 30–38 (IGRGVSSVV) and Lys-53. Asp-153 (proton acceptor) is an active-site residue. Positions 306–330 (QRFRVAVWTILAAGRVALSSHRLRP) are calmodulin-binding (domain-N). The segment at 346–370 (VRRLIDNCAFRLYGHWVKKGEQQNR) is calmodulin-binding (domain-C).

This sequence belongs to the protein kinase superfamily. CAMK Ser/Thr protein kinase family. As to quaternary structure, hexadecamer of 4 heterotetramers, each composed of alpha, beta, gamma, and delta subunits. Alpha (PHKA1 or PHKA2) and beta (PHKB) are regulatory subunits, gamma (PHKG1 or PHKG2) is the catalytic subunit, and delta is calmodulin.

The enzyme catalyses 2 ATP + phosphorylase b = 2 ADP + phosphorylase a.. Functionally, catalytic subunit of the phosphorylase b kinase (PHK), which mediates the neural and hormonal regulation of glycogen breakdown (glycogenolysis) by phosphorylating and thereby activating glycogen phosphorylase. May regulate glycogeneolysis in the testis. In vitro, phosphorylates PYGM. In Mus musculus (Mouse), this protein is Phosphorylase b kinase gamma catalytic chain, liver/testis isoform (Phkg2).